We begin with the raw amino-acid sequence, 527 residues long: MLKLLVLGVLLHDVSLSGQDEAPPKADGIPGEPLFNYASIRLPEEHIPFFLHNNRHIATVCKKDSHCPYKKHLENLKYCWGYEKSCKPEFRFGYPVCTYIDMGWTDTLESAQDIFWKQADFGYAGERLEELHVLCQPEEPHDSSLLCSRYLQYCRAANLYLDLRNIKRNHDRFKEDFFQSGEIGGHCTLDTQTLLSEGQRKSPLQSWFAELQSYTELNFRPIEDAKCDVVIEKPTYFMKLDAGVNMYHHFCDFVNLYITQHVNNSFSTDVYIVMWDTSSYGYGDLFSDTWKAFTDYDVIHLKTYDSKRVCFKEAVFSLLPRMRYGLFYNTPLISGCQNTGLFRAFSQHVLHRLNITQEGPKDGKIRVTILARSTEYRKILNQNELVNALKTVSTLEVQIVDYKYKELGFLDQLRITHNTDIFIGMHGAGLTHLLFLPDWAAVFELYNCEDERCYLDLARLRGVHYITWRRQNKVFPQDKGHHPTLGEHPKFTNYSFDVEEFMYLVLQAADHVLQHPKWPFKKKRDEL.

An N-terminal signal peptide occupies residues 1 to 17 (MLKLLVLGVLLHDVSLS). The Required for optimal activity motif lies at 295–297 (DYD). Residue N354 is glycosylated (N-linked (GlcNAc...) asparagine). Positions 524–527 (RDEL) match the Prevents secretion from ER motif.

It belongs to the glycosyltransferase 61 family.

It localises to the endoplasmic reticulum lumen. The enzyme catalyses L-seryl-[protein] + UDP-N-acetyl-alpha-D-glucosamine = 3-O-(N-acetyl-beta-D-glucosaminyl)-L-seryl-[protein] + UDP + H(+). It carries out the reaction L-threonyl-[protein] + UDP-N-acetyl-alpha-D-glucosamine = 3-O-(N-acetyl-beta-D-glucosaminyl)-L-threonyl-[protein] + UDP + H(+). Its function is as follows. Catalyzes the transfer of a single N-acetylglucosamine from UDP-GlcNAc to a serine or threonine residue in extracellular proteins resulting in their modification with a beta-linked N-acetylglucosamine (O-GlcNAc). Specifically glycosylates the Thr residue located between the fifth and sixth conserved cysteines of folded EGF-like domains. The sequence is that of EGF domain-specific O-linked N-acetylglucosamine transferase (EOGT) from Canis lupus familiaris (Dog).